The primary structure comprises 80 residues: Translation initiation factor IF-1, chloroplastic (80 aa).

Residues 1-72 form the S1-like domain; sequence MKKQNLIDME…TKGRIIYRLR (72 aa).

Belongs to the IF-1 family. In terms of assembly, component of the 30S ribosomal translation pre-initiation complex which assembles on the 30S ribosome in the order IF-2 and IF-3, IF-1 and N-formylmethionyl-tRNA(fMet); mRNA recruitment can occur at any time during PIC assembly.

The protein resides in the plastid. The protein localises to the chloroplast. One of the essential components for the initiation of protein synthesis. Stabilizes the binding of IF-2 and IF-3 on the 30S subunit to which N-formylmethionyl-tRNA(fMet) subsequently binds. Helps modulate mRNA selection, yielding the 30S pre-initiation complex (PIC). Upon addition of the 50S ribosomal subunit IF-1, IF-2 and IF-3 are released leaving the mature 70S translation initiation complex. The sequence is that of Translation initiation factor IF-1, chloroplastic from Adiantum capillus-veneris (Maidenhair fern).